The following is a 150-amino-acid chain: uncharacterized protein (150 aa).

A signal peptide spans 1–28 (MPLDVWIAFSYFIDFFQWLFMLNAEVMR).

This is an uncharacterized protein from Archaeoglobus fulgidus (strain ATCC 49558 / DSM 4304 / JCM 9628 / NBRC 100126 / VC-16).